The sequence spans 265 residues: Glutamate racemase (265 aa).

Residues 10 to 11 (DS) and 42 to 43 (YG) each bind substrate. Residue C73 is the Proton donor/acceptor of the active site. Residue 74–75 (NT) participates in substrate binding. The active-site Proton donor/acceptor is C183. 184–185 (TH) contacts substrate.

Belongs to the aspartate/glutamate racemases family.

It catalyses the reaction L-glutamate = D-glutamate. It functions in the pathway cell wall biogenesis; peptidoglycan biosynthesis. Functionally, provides the (R)-glutamate required for cell wall biosynthesis. This is Glutamate racemase from Corynebacterium diphtheriae (strain ATCC 700971 / NCTC 13129 / Biotype gravis).